A 1337-amino-acid polypeptide reads, in one-letter code: DNA mismatch repair protein Msh6 (1337 aa).

The PWWP domain occupies 68–130 (PGDLVWAKME…IKYLRPYKGS (63 aa)). The interval 170–310 (AVCSEPSDTE…SEAPKRAAPV (141 aa)) is disordered. Positions 176 to 187 (SDTEEAEEEEME) are enriched in acidic residues. Over residues 226–248 (VLDSDSDRDGSDVEFKPDVKEAS) the composition is skewed to basic and acidic residues. Over residues 257-272 (DENEATDVETDEESIE) the composition is skewed to acidic residues. The segment covering 279–292 (PSKRKRGNVSKPSK) has biased composition (basic residues). A compositionally biased stretch (basic and acidic residues) spans 294–305 (SSLENEHSEAPK). 1111–1118 (GPNMGGKS) is a binding site for ATP.

The protein belongs to the DNA mismatch repair MutS family.

The protein localises to the nucleus. Its function is as follows. Component of the post-replicative DNA mismatch repair system (MMR). Involved in B cell growth by positively regulating B cell proliferation and controlling replication efficiency. Controls cell cycle to prevent re-replication and defects in DNA damage-induced G2 checkpoint. Doesn't seem to counteract or control the immunoglobulin gene conversion (Ig GC) and to contribute to guanine/uracil mismatch repair. This chain is DNA mismatch repair protein Msh6, found in Gallus gallus (Chicken).